Consider the following 847-residue polypeptide: Glucans biosynthesis glucosyltransferase H (847 aa).

The Cytoplasmic portion of the chain corresponds to 1–138 (MNKTTEYIDA…KWRTVGTIRR (138 aa)). Residues 139-156 (YILLILTLAQTVVATWYM) traverse the membrane as a helical segment. Over 157–193 (KTILPYQGWALINPMDMVGQDVWVSFMQLLPYMLQTG) the chain is Periplasmic. Residues 194–216 (ILILFAVLFCWVSAGFWTALMGF) form a helical membrane-spanning segment. Topologically, residues 217–511 (LQLLIGRDKY…LVKGMHPVHR (295 aa)) are cytoplasmic. The chain crosses the membrane as a helical span at residues 512–534 (AVFLTGVMSYLSAPLWFMFLALS). Residues 535–567 (TALQVVHALTEPQYFLQPRQLFPVWPQWRPELA) are Periplasmic-facing. Residues 568-590 (IALFASTMVLLFLPKLLSILLIW) form a helical membrane-spanning segment. The Cytoplasmic segment spans residues 591 to 602 (CKGTKEYGGFWR). A helical transmembrane segment spans residues 603–625 (VTLSLLLEVLFSVLLAPVRMLFH). Residues 626–679 (TVFVVSAFLGWEVVWNSPQRDDDSTSWGEAFKRHGSQLLLGLVWAVGMAWLDLR) are Periplasmic-facing. The chain crosses the membrane as a helical span at residues 680 to 702 (FLFWLAPIVFSLILSPFVSVISS). The Cytoplasmic portion of the chain corresponds to 703-847 (RATVGLRTKR…ALRKPDAASQ (145 aa)).

The protein belongs to the glycosyltransferase 2 family. OpgH subfamily.

It is found in the cell inner membrane. It participates in glycan metabolism; osmoregulated periplasmic glucan (OPG) biosynthesis. Functionally, involved in the biosynthesis of osmoregulated periplasmic glucans (OPGs). The chain is Glucans biosynthesis glucosyltransferase H from Escherichia coli O6:H1 (strain CFT073 / ATCC 700928 / UPEC).